The primary structure comprises 859 residues: Suppressor protein MPT5 (859 aa).

Positions 85–108 are disordered; that stretch reads MNNTSTSNSANSFSPNPNAASNST. The segment covering 86 to 108 has biased composition (low complexity); the sequence is NNTSTSNSANSFSPNPNAASNST. Positions 188–596 constitute a PUM-HD domain; it reads DNSSFGLSSS…KIKLKVKAYA (409 aa). 8 Pumilio repeats span residues 209-247, 248-283, 284-320, 325-362, 363-400, 401-438, 439-474, and 503-539; these read PLRD…LMYE, QIKP…LLIQ, TIYP…LIIK, EFTS…FIID, AIVE…KISV, KIVQ…ELFN, RLSN…FIVN, and DIFT…AYNK. Positions 620–658 are disordered; it reads TINNENKNPHNKNSHNHNHNHNHNHAHNNNNNNNQKSHT. The span at 628 to 645 shows a compositional bias: basic residues; it reads PHNKNSHNHNHNHNHNHA. Residues S662, S834, and S838 each carry the phosphoserine modification.

The protein resides in the cytoplasm. In terms of biological role, RNA-binding protein involved in post-transcriptional regulation. Negatively regulates expression of HO by binding to the 3'-UTR of HO mRNA. Predominantly binds to mRNAs encoding chromatin modifiers and spindle pole body components. Recognizes and binds to 5'-TGTAA[CT]A[AT]TA-3' in the 3'-UTR of target mRNAs. Multicopy suppressor of POP2 mutation. Required for high temperature growth. The chain is Suppressor protein MPT5 (MPT5) from Saccharomyces cerevisiae (strain ATCC 204508 / S288c) (Baker's yeast).